The sequence spans 163 residues: MSNPQPDDSNNRIVAVTLDEESIGRSGPDIEHERAIAIYDLVEKNLFAPEGAGEGPFTLHIGITGSRLMFDIRREDGTPVVAHLLSLSPFRRIVKDYFMICDSYYQAIRTATPDKIEAIDMGRRGIHDEGSRTLQERLAGKVRIDFETARRLFTLISVLHWKG.

The protein belongs to the UPF0262 family.

This Rhodopseudomonas palustris (strain HaA2) protein is UPF0262 protein RPB_4349.